The primary structure comprises 293 residues: Dioxygenase cdmA (293 aa).

Fe cation is bound by residues His-135, Asp-137, and His-212.

It belongs to the PhyH family. Homodimer. Requires Fe cation as cofactor.

It carries out the reaction chrodrimanin C + 2-oxoglutarate + O2 = verruculide A + succinate + CO2 + H2O. It catalyses the reaction chrodrimanin H + 2-oxoglutarate + O2 = chrodrimanin E + succinate + CO2 + H2O. It participates in secondary metabolite biosynthesis; terpenoid biosynthesis. In terms of biological role, dioxygenase; part of the gene cluster that mediates the biosynthesis of chrodrimanin B, a meroterpenoid that acts as a potent blocker of insect GABA-gated chloride channels. The first step of the pathway is the biosynthesis of 6-hydroxymellein by the polyketide synthase cdmE. The prenyltransferase cdmH acts as a 6-hydroxymellein 5-farnesyltransferase and produces the hydrophobic metabolite verruculide C. The FAD-dependent monooxygenase cdmI further converts verruculide C into verruculide B. The terpene cyclase cdmG then produced the pentacyclic molecule 3-hydroxypentacecilide A, the backbone structure of chrodrimanin B, via folding the farnesyl moiety of the substrate into the chair-boat conformation. The short-chain dehydrogenase/reductase cdmF functions as the 3-OH dehydrogenase that oxidizes the C-3 hydroxyl group of 3-hydroxypentacecilide A and produces chrodrimanin C, the dehydrogenated product of 3-hydroxypentacecilide A. The cytochrome P450 monooxygenase cdmJ then accepts both 3-hydroxypentacecilide A and chrodrimanin C and functions as a C-7-beta-hydroxylase to produce respectively chrodrimanin H and chrodrimanin F. The dioxygenase cdmA accepts chrodrimanin H to afford chrodrimanin E, which is further transformed to chrodrimanin A by the dioxygenase cdmD. CdmA can also accept chrodrimanin C as substrate to convert it into verruculide A, which is further converted into chrodrimanin T by cdmD. The last step of the biosynthesis is proposed to be performed by the acetyltransferase cdmC which acetylates chrodrimanin A to yield chrodrimanin B. The pathway may also lead to the production of additional shunt products, including chrodrimanins T and U. The chain is Dioxygenase cdmA from Talaromyces verruculosus (Penicillium verruculosum).